Reading from the N-terminus, the 641-residue chain is Bifunctional protein glk (641 aa).

Positions 1–340 (MSTGAQTKAA…QLSNRTGGAS (340 aa)) are glucokinase. 23–28 (ADVGGT) is a binding site for ATP. Positions 341-417 (SAVFERIRQM…LKLATGLTGT (77 aa)) constitute an HTH rpiR-type domain. Residues 341–641 (SAVFERIRQM…SHGAAPAAKD (301 aa)) form a putative HTH-type transcriptional regulator region. Positions 377–396 (IVDIARKADVSQPTVIRFCR) form a DNA-binding region, H-T-H motif. The region spanning 461–600 (AIDILNNARR…AVGVAIRRAA (140 aa)) is the SIS domain. Residues 576-596 (SMISRILHLVMIDILAVGVAI) traverse the membrane as a helical segment.

This sequence in the N-terminal section; belongs to the bacterial glucokinase family.

It is found in the membrane. It catalyses the reaction D-glucose + ATP = D-glucose 6-phosphate + ADP + H(+). This chain is Bifunctional protein glk (glk), found in Burkholderia pseudomallei (strain 1710b).